The chain runs to 367 residues: Probable butyrate kinase (367 aa).

This sequence belongs to the acetokinase family.

It localises to the cytoplasm. The catalysed reaction is butanoate + ATP = butanoyl phosphate + ADP. This Bacillus cereus (strain B4264) protein is Probable butyrate kinase.